Consider the following 1121-residue polypeptide: RecBCD enzyme subunit RecC (1121 aa).

It belongs to the RecC family. As to quaternary structure, heterotrimer of RecB, RecC and RecD. All subunits contribute to DNA-binding.

Functionally, a helicase/nuclease that prepares dsDNA breaks (DSB) for recombinational DNA repair. Binds to DSBs and unwinds DNA via a highly rapid and processive ATP-dependent bidirectional helicase activity. Unwinds dsDNA until it encounters a Chi (crossover hotspot instigator) sequence from the 3' direction. Cuts ssDNA a few nucleotides 3' to the Chi site. The properties and activities of the enzyme are changed at Chi. The Chi-altered holoenzyme produces a long 3'-ssDNA overhang and facilitates RecA-binding to the ssDNA for homologous DNA recombination and repair. Holoenzyme degrades any linearized DNA that is unable to undergo homologous recombination. In the holoenzyme this subunit recognizes the wild-type Chi sequence, and when added to isolated RecB increases its ATP-dependent helicase processivity. The chain is RecBCD enzyme subunit RecC from Haemophilus influenzae (strain ATCC 51907 / DSM 11121 / KW20 / Rd).